Reading from the N-terminus, the 550-residue chain is Calcium-dependent protein kinase 20 (550 aa).

The tract at residues Met1 to His58 is disordered. Gly2 carries the N-myristoyl glycine lipid modification. A compositionally biased stretch (basic and acidic residues) spans Gln18–Lys30. The region spanning Tyr75 to Leu333 is the Protein kinase domain. Residues Leu81 to Thr89 and Lys104 each bind ATP. The active-site Proton acceptor is the Asp199. The autoinhibitory domain stretch occupies residues Ala339–Ile369. 4 EF-hand domains span residues Glu376–Gln411, Met412–Ile447, Gly448–Ala483, and Asn484–Trp519. Ca(2+) contacts are provided by Asp389, Asn391, Asp393, Met395, Glu400, Asp425, Asp427, Asn429, Ser431, Glu436, Asp461, Asn463, Ser465, Tyr467, Glu472, Asp497, Asp499, Asp501, Lys503, and Glu508.

Belongs to the protein kinase superfamily. Ser/Thr protein kinase family. CDPK subfamily. As to expression, expressed in roots and leaf blades.

It is found in the membrane. The enzyme catalyses L-seryl-[protein] + ATP = O-phospho-L-seryl-[protein] + ADP + H(+). It carries out the reaction L-threonyl-[protein] + ATP = O-phospho-L-threonyl-[protein] + ADP + H(+). Activated by calcium. Autophosphorylation may play an important role in the regulation of the kinase activity. In terms of biological role, may play a role in signal transduction pathways that involve calcium as a second messenger. The polypeptide is Calcium-dependent protein kinase 20 (Oryza sativa subsp. japonica (Rice)).